We begin with the raw amino-acid sequence, 451 residues long: DNA polymerase IV (451 aa).

The UmuC domain occupies Val-5–Gly-187. Asp-9 and Asp-104 together coordinate Mg(2+). Residue Glu-105 is part of the active site.

This sequence belongs to the DNA polymerase type-Y family. As to quaternary structure, monomer. It depends on Mg(2+) as a cofactor.

Its subcellular location is the cytoplasm. It catalyses the reaction DNA(n) + a 2'-deoxyribonucleoside 5'-triphosphate = DNA(n+1) + diphosphate. In terms of biological role, poorly processive, error-prone DNA polymerase involved in untargeted mutagenesis. Copies undamaged DNA at stalled replication forks, which arise in vivo from mismatched or misaligned primer ends. These misaligned primers can be extended by PolIV. Exhibits no 3'-5' exonuclease (proofreading) activity. May be involved in translesional synthesis, in conjunction with the beta clamp from PolIII. The sequence is that of DNA polymerase IV from Corynebacterium diphtheriae (strain ATCC 700971 / NCTC 13129 / Biotype gravis).